A 190-amino-acid polypeptide reads, in one-letter code: Protein LZIC (190 aa).

A coiled-coil region spans residues 2-63 (ASRGKTETSK…SEFNDSLKKI (62 aa)).

Belongs to the CTNNBIP1 family. In terms of assembly, does not interact with CTNNB1.

The protein is Protein LZIC (Lzic) of Rattus norvegicus (Rat).